An 879-amino-acid polypeptide reads, in one-letter code: Alanine--tRNA ligase (879 aa).

Residues histidine 566, histidine 570, cysteine 668, and histidine 672 each contribute to the Zn(2+) site.

The protein belongs to the class-II aminoacyl-tRNA synthetase family. It depends on Zn(2+) as a cofactor.

Its subcellular location is the cytoplasm. The enzyme catalyses tRNA(Ala) + L-alanine + ATP = L-alanyl-tRNA(Ala) + AMP + diphosphate. Its function is as follows. Catalyzes the attachment of alanine to tRNA(Ala) in a two-step reaction: alanine is first activated by ATP to form Ala-AMP and then transferred to the acceptor end of tRNA(Ala). Also edits incorrectly charged Ser-tRNA(Ala) and Gly-tRNA(Ala) via its editing domain. The sequence is that of Alanine--tRNA ligase from Clostridium beijerinckii (strain ATCC 51743 / NCIMB 8052) (Clostridium acetobutylicum).